The following is an 86-amino-acid chain: Kappa-theraphotoxin-Cg1a 3 (86 aa).

The signal sequence occupies residues 1-21 (MKVSVLITLAVLGVMFVWASA). A propeptide spanning residues 22-50 (AELEERGSDQRDSPAWLKSMERIFRSEER) is cleaved from the precursor. 3 disulfide bridges follow: cysteine 52/cysteine 66, cysteine 59/cysteine 71, and cysteine 65/cysteine 78. Phenylalanine amide is present on phenylalanine 84.

Belongs to the neurotoxin 10 (Hwtx-1) family. 28 (Jztx-11) subfamily. In terms of tissue distribution, expressed by the venom gland.

The protein resides in the secreted. In terms of biological role, this toxin acts as a voltage-dependent gating-modifier. It inhibits the sodium conductance (IC(50)=124 nM) and slows the fast inactivation (EC(50)=1180 nM) of Nav1.5/SCN5A. It significantly shifts the activation to more depolarized voltages and decreases the deactivation of Nav1.5 currents upon extreme depolarization, but only slightly affects voltage-dependence of steady-state inactivation. In addition, this toxin causes an approximately five-fold decrease in the rate of recovery from inactivation and an approximately 1.9-fold reduction in the closed-state inactivation rate. This toxin integrates the functions of site 3 toxins (alpha-scorpion toxins) with site 4 toxins (beta-scorpion and spider toxins) by targeting multiple sites on Nav1.5. Also shows inhibition of voltage-gated potassium channels (5 uM completely inhibits Kv2.1/KCNB1, whereas 5 uM moderately inhibits Kv4.2/KCND2 Kv4.1/KCND1 channels). The sequence is that of Kappa-theraphotoxin-Cg1a 3 from Chilobrachys guangxiensis (Chinese earth tiger tarantula).